A 115-amino-acid polypeptide reads, in one-letter code: NAD(P)H-quinone oxidoreductase subunit M (115 aa).

Belongs to the complex I NdhM subunit family. In terms of assembly, NDH-1 can be composed of about 15 different subunits; different subcomplexes with different compositions have been identified which probably have different functions.

Its subcellular location is the cellular thylakoid membrane. The enzyme catalyses a plastoquinone + NADH + (n+1) H(+)(in) = a plastoquinol + NAD(+) + n H(+)(out). The catalysed reaction is a plastoquinone + NADPH + (n+1) H(+)(in) = a plastoquinol + NADP(+) + n H(+)(out). Its function is as follows. NDH-1 shuttles electrons from an unknown electron donor, via FMN and iron-sulfur (Fe-S) centers, to quinones in the respiratory and/or the photosynthetic chain. The immediate electron acceptor for the enzyme in this species is believed to be plastoquinone. Couples the redox reaction to proton translocation, and thus conserves the redox energy in a proton gradient. Cyanobacterial NDH-1 also plays a role in inorganic carbon-concentration. In Synechococcus sp. (strain CC9902), this protein is NAD(P)H-quinone oxidoreductase subunit M.